Reading from the N-terminus, the 116-residue chain is Ribosome-binding factor A (116 aa).

The protein belongs to the RbfA family. Monomer. Binds 30S ribosomal subunits, but not 50S ribosomal subunits or 70S ribosomes.

It is found in the cytoplasm. Functionally, one of several proteins that assist in the late maturation steps of the functional core of the 30S ribosomal subunit. Associates with free 30S ribosomal subunits (but not with 30S subunits that are part of 70S ribosomes or polysomes). Required for efficient processing of 16S rRNA. May interact with the 5'-terminal helix region of 16S rRNA. This is Ribosome-binding factor A from Streptococcus sanguinis (strain SK36).